Here is a 146-residue protein sequence, read N- to C-terminus: UPF0735 ACT domain-containing protein TTE2621 (146 aa).

Residues 71–146 (TFSMVLEHMP…GVRKIEVLGE (76 aa)) enclose the ACT domain.

This sequence belongs to the UPF0735 family.

The protein is UPF0735 ACT domain-containing protein TTE2621 of Caldanaerobacter subterraneus subsp. tengcongensis (strain DSM 15242 / JCM 11007 / NBRC 100824 / MB4) (Thermoanaerobacter tengcongensis).